The chain runs to 269 residues: UPF0162 protein bbp_163 (269 aa).

This sequence belongs to the UPF0162 family.

This is UPF0162 protein bbp_163 from Buchnera aphidicola subsp. Baizongia pistaciae (strain Bp).